The primary structure comprises 60 residues: Large ribosomal subunit protein uL30 (60 aa).

Belongs to the universal ribosomal protein uL30 family. As to quaternary structure, part of the 50S ribosomal subunit.

The polypeptide is Large ribosomal subunit protein uL30 (Salinispora tropica (strain ATCC BAA-916 / DSM 44818 / JCM 13857 / NBRC 105044 / CNB-440)).